A 350-amino-acid chain; its full sequence is Phosphoribosylformylglycinamidine cyclo-ligase (350 aa).

The protein belongs to the AIR synthase family.

It localises to the cytoplasm. The enzyme catalyses 2-formamido-N(1)-(5-O-phospho-beta-D-ribosyl)acetamidine + ATP = 5-amino-1-(5-phospho-beta-D-ribosyl)imidazole + ADP + phosphate + H(+). It functions in the pathway purine metabolism; IMP biosynthesis via de novo pathway; 5-amino-1-(5-phospho-D-ribosyl)imidazole from N(2)-formyl-N(1)-(5-phospho-D-ribosyl)glycinamide: step 2/2. This chain is Phosphoribosylformylglycinamidine cyclo-ligase, found in Pseudoalteromonas translucida (strain TAC 125).